The primary structure comprises 64 residues: Large ribosomal subunit protein uL29 (64 aa).

Belongs to the universal ribosomal protein uL29 family.

This chain is Large ribosomal subunit protein uL29, found in Pseudomonas entomophila (strain L48).